We begin with the raw amino-acid sequence, 209 residues long: Large ribosomal subunit protein uL3 (209 aa).

Glutamine 150 bears the N5-methylglutamine mark.

Belongs to the universal ribosomal protein uL3 family. As to quaternary structure, part of the 50S ribosomal subunit. Forms a cluster with proteins L14 and L19. Methylated by PrmB.

Its function is as follows. One of the primary rRNA binding proteins, it binds directly near the 3'-end of the 23S rRNA, where it nucleates assembly of the 50S subunit. This is Large ribosomal subunit protein uL3 from Vibrio vulnificus (strain CMCP6).